The chain runs to 445 residues: Putative serpin-Z5 (445 aa).

Positions 356 to 380 (GTEAAASAINMVCGMSMTPEPRPVP) are RCL.

This sequence belongs to the serpin family.

Functionally, probable serine protease inhibitor. The sequence is that of Putative serpin-Z5 from Oryza sativa subsp. japonica (Rice).